A 405-amino-acid polypeptide reads, in one-letter code: L-carnitine CoA-transferase (405 aa).

Lys-97 and Arg-104 together coordinate CoA. The active-site Nucleophile is the Asp-169.

Belongs to the CoA-transferase III family. CaiB subfamily. As to quaternary structure, homodimer.

It is found in the cytoplasm. It catalyses the reaction crotonobetainyl-CoA + (R)-carnitine = crotonobetaine + (R)-carnitinyl-CoA. It carries out the reaction 4-(trimethylamino)butanoyl-CoA + (R)-carnitine = (R)-carnitinyl-CoA + 4-(trimethylamino)butanoate. It functions in the pathway amine and polyamine metabolism; carnitine metabolism. Its function is as follows. Catalyzes the reversible transfer of the CoA moiety from gamma-butyrobetainyl-CoA to L-carnitine to generate L-carnitinyl-CoA and gamma-butyrobetaine. Is also able to catalyze the reversible transfer of the CoA moiety from gamma-butyrobetainyl-CoA or L-carnitinyl-CoA to crotonobetaine to generate crotonobetainyl-CoA. The protein is L-carnitine CoA-transferase of Escherichia coli O17:K52:H18 (strain UMN026 / ExPEC).